The chain runs to 220 residues: Metalloproteinase inhibitor 2 (220 aa).

The N-terminal stretch at 1 to 26 is a signal peptide; that stretch reads MGAAARSLRLALGLLLLATLPRPADA. Cys27 contacts Zn(2+). Involved in metalloproteinase-binding stretches follow at residues 27–30 and 95–96; these read CSCS and SA. 6 disulfides stabilise this stretch: Cys27/Cys98, Cys29/Cys127, Cys39/Cys152, Cys154/Cys201, Cys159/Cys164, and Cys172/Cys193. Positions 27-152 constitute an NTR domain; the sequence is CSCSPVHPQQ…SLNHRYQMGC (126 aa).

This sequence belongs to the protease inhibitor I35 (TIMP) family. As to quaternary structure, interacts (via the C-terminal) with MMP2 (via the C-terminal PEX domain); the interaction inhibits the MMP2 activity. In terms of processing, the activity of TIMP2 is dependent on the presence of disulfide bonds.

The protein resides in the secreted. Complexes with metalloproteinases (such as collagenases) and irreversibly inactivates them by binding to their catalytic zinc cofactor. The sequence is that of Metalloproteinase inhibitor 2 (TIMP2) from Canis lupus familiaris (Dog).